The chain runs to 156 residues: 3-dehydroquinate dehydratase (156 aa).

The active-site Proton acceptor is the Y24. Residues N76, H82, and D89 each contribute to the substrate site. The active-site Proton donor is H102. Substrate-binding positions include 103–104 (IS) and R113.

It belongs to the type-II 3-dehydroquinase family. In terms of assembly, homododecamer.

It carries out the reaction 3-dehydroquinate = 3-dehydroshikimate + H2O. It functions in the pathway metabolic intermediate biosynthesis; chorismate biosynthesis; chorismate from D-erythrose 4-phosphate and phosphoenolpyruvate: step 3/7. Catalyzes a trans-dehydration via an enolate intermediate. The polypeptide is 3-dehydroquinate dehydratase (Nitrobacter winogradskyi (strain ATCC 25391 / DSM 10237 / CIP 104748 / NCIMB 11846 / Nb-255)).